Here is a 357-residue protein sequence, read N- to C-terminus: DNA polymerase IV (357 aa).

Residues 4–185 enclose the UmuC domain; sequence IIHCDCDCFY…LPVERLFGVG (182 aa). Mg(2+) contacts are provided by Asp-8 and Asp-103. Glu-104 is an active-site residue.

It belongs to the DNA polymerase type-Y family. In terms of assembly, monomer. Mg(2+) is required as a cofactor.

It localises to the cytoplasm. The enzyme catalyses DNA(n) + a 2'-deoxyribonucleoside 5'-triphosphate = DNA(n+1) + diphosphate. Functionally, poorly processive, error-prone DNA polymerase involved in untargeted mutagenesis. Copies undamaged DNA at stalled replication forks, which arise in vivo from mismatched or misaligned primer ends. These misaligned primers can be extended by PolIV. Exhibits no 3'-5' exonuclease (proofreading) activity. May be involved in translesional synthesis, in conjunction with the beta clamp from PolIII. The chain is DNA polymerase IV from Ralstonia nicotianae (strain ATCC BAA-1114 / GMI1000) (Ralstonia solanacearum).